Consider the following 490-residue polypeptide: JNK-interacting protein 1 (490 aa).

Disordered regions lie at residues M1–P71 and E213–Q254. Over residues G231–T249 the composition is skewed to polar residues. The SH3 domain occupies M271–Y332. Positions K344–E479 constitute a PID domain.

The protein belongs to the JIP scaffold family. As to quaternary structure, forms homo- and heterooligomeric complexes. Binds Hep, a dual specificity protein kinase in the JNK pathway, but not its downstream target bsk. The C-terminal region interacts with the kinesin light chain protein, Klc, and the C-terminal PTY motif of amyloid-beta protein precursor-like protein, Appl. Expressed in the brain, CNS, PNS and cells posterior to the morphogenetic furrow in the eye imaginal disk of late embryos.

The protein localises to the cytoplasm. The JNK-interacting protein (JIP) group of scaffold proteins selectively mediates JNK signaling by aggregating specific components of the MAPK cascade to form a functional JNK signaling module. May function as a regulator of vesicle transport, through interactions with the JNK-signaling components and motor proteins. The protein is JNK-interacting protein 1 (Aplip1) of Drosophila melanogaster (Fruit fly).